We begin with the raw amino-acid sequence, 227 residues long: 7-cyano-7-deazaguanine synthase (227 aa).

Leu7–Thr17 provides a ligand contact to ATP. Zn(2+) contacts are provided by Cys187, Cys195, Cys198, and Cys201.

It belongs to the QueC family. It depends on Zn(2+) as a cofactor.

The enzyme catalyses 7-carboxy-7-deazaguanine + NH4(+) + ATP = 7-cyano-7-deazaguanine + ADP + phosphate + H2O + H(+). It participates in purine metabolism; 7-cyano-7-deazaguanine biosynthesis. Catalyzes the ATP-dependent conversion of 7-carboxy-7-deazaguanine (CDG) to 7-cyano-7-deazaguanine (preQ(0)). This is 7-cyano-7-deazaguanine synthase from Chlorobium luteolum (strain DSM 273 / BCRC 81028 / 2530) (Pelodictyon luteolum).